Consider the following 380-residue polypeptide: Large ribosomal subunit protein mL38 (380 aa).

Residues 1–26 (MAAPWWRVVLNGSRNWRGFSTSAALS) constitute a mitochondrion transit peptide. Residues 101-122 (QQLLERKRVLRELRTSVEEERA) are a coiled coil.

This sequence belongs to the phosphatidylethanolamine-binding protein family. Mitochondrion-specific ribosomal protein mL38 subfamily. Component of the mitochondrial ribosome large subunit (39S) which comprises a 16S rRNA and about 50 distinct proteins.

It localises to the mitochondrion. This Bos taurus (Bovine) protein is Large ribosomal subunit protein mL38 (MRPL38).